A 385-amino-acid chain; its full sequence is tRNA-specific 2-thiouridylase MnmA (385 aa).

ATP contacts are provided by residues 29–36 and Leu55; that span reads GLSGGVDS. The Nucleophile role is filled by Cys116. A disulfide bridge connects residues Cys116 and Cys225. Gly141 contributes to the ATP binding site. The interaction with tRNA stretch occupies residues 175–177; sequence KDQ. Catalysis depends on Cys225, which acts as the Cysteine persulfide intermediate. Positions 330 to 331 are interaction with tRNA; sequence RY.

This sequence belongs to the MnmA/TRMU family.

It localises to the cytoplasm. The catalysed reaction is S-sulfanyl-L-cysteinyl-[protein] + uridine(34) in tRNA + AH2 + ATP = 2-thiouridine(34) in tRNA + L-cysteinyl-[protein] + A + AMP + diphosphate + H(+). In terms of biological role, catalyzes the 2-thiolation of uridine at the wobble position (U34) of tRNA, leading to the formation of s(2)U34. The polypeptide is tRNA-specific 2-thiouridylase MnmA (Prochlorococcus marinus (strain AS9601)).